A 168-amino-acid polypeptide reads, in one-letter code: Plasma membrane-associated cation-binding protein 2 (168 aa).

A lipid anchor (N-myristoyl glycine) is attached at glycine 2. 7 consecutive repeat copies span residues 26-30, 69-73, 94-99, 103-107, 110-115, 118-122, and 124-129. A 7 X 5 AA approximate repeats of V-E-E-K-K region spans residues 26 to 129; sequence VEEEKPREVE…EKKPVEEEKK (104 aa). Residues 56–77 adopt a coiled-coil conformation; sequence EEIIATGEKEIEIVEEKKEEAK. The span at 88-131 shows a compositional bias: basic and acidic residues; the sequence is EEKKPAVEEEKKTAPVEEKKPAVEEEKKPAVEEKKPVEEEKKEV. The interval 88 to 168 is disordered; it reads EEKKPAVEEE…ETPAAAPQKA (81 aa). The segment covering 152–168 has biased composition (low complexity); that stretch reads ETPAKAPETPAAAPQKA.

This sequence belongs to the DREPP family. Binds microtubules. Interacts with calcium ion Ca(2+), calmodulin and some phosphatidylinositol phosphates (PtdInsPs) such as phosphatidylinositol 3,5-bisphosphate [PtdIns(3,5)P(2)], PtdIns(4,5)P(2) and PtdIns(3,4,5)P(3). The cofactor is Cu(2+). In terms of tissue distribution, mostly expressed in the expanding cells, specifically in roots (except in root tips) and flowers (at protein level). Also detected in cotyledons, hypocotyls and trichome stalks.

It is found in the cell membrane. The protein resides in the cytoplasm. It localises to the cytoskeleton. Its function is as follows. May be involved in intracellular signaling through interaction with PtdInsPs and calmodulin (CaM); may keep PtdInsPs attached to the plasma membrane until Ca(2+)-CaM reaches a competitive concentration subsequent to an increase triggered by a stimulus, thus leading to PtdInsPs release and subsequent activation of InsPs-dependent signaling cascade. Binds to microtubules and inhibits tubulin polymerization. Regulates directional cell growth and cortical microtubule organization by destabilizing microtubules (e.g. in cotyledon pavement cells). This is Plasma membrane-associated cation-binding protein 2 from Arabidopsis thaliana (Mouse-ear cress).